The following is a 504-amino-acid chain: Anaerobic nitric oxide reductase transcription regulator NorR (504 aa).

4-aspartylphosphate is present on Asp57. In terms of domain architecture, Sigma-54 factor interaction spans 187–416; sequence MIGLSPGMTQ…LEHAIHRAVV (230 aa). Residues 215–222 and 278–287 each bind ATP; these read GETGTGKE and ADNGTLFLDE. Positions 479 to 498 form a DNA-binding region, H-T-H motif; that stretch reads WAACARMLETDVANLHRLAK.

The protein operates within nitrogen metabolism; nitric oxide reduction. Its function is as follows. Required for the expression of anaerobic nitric oxide (NO) reductase, acts as a transcriptional activator for at least the norVW operon. Activation also requires sigma-54. The polypeptide is Anaerobic nitric oxide reductase transcription regulator NorR (Escherichia coli O6:K15:H31 (strain 536 / UPEC)).